Consider the following 228-residue polypeptide: DNA-binding response regulator MtrA (228 aa).

The 114-residue stretch at 7-120 (RILVVDDDAS…ELVARVRARL (114 aa)) folds into the Response regulatory domain. 4-aspartylphosphate is present on Asp-56. A DNA-binding region (ompR/PhoB-type) is located at residues 128 to 227 (AEMLSIADVE…VRGVGYKAGP (100 aa)).

Post-translationally, phosphorylated by MtrB.

Functionally, member of the two-component regulatory system MtrA/MtrB. In Mycobacterium bovis (strain ATCC BAA-935 / AF2122/97), this protein is DNA-binding response regulator MtrA (mtrA).